Reading from the N-terminus, the 325-residue chain is MEIFDYDNILLLPRKCRVESRSECDTSVELGGRRFRLPVVPANMKTVVDEKICTWLAQNGYFYVMHRFDLDNVQFVKDMHAQGCFASISLGVKQPDYDTVDRFVAEGICPEYITIDIAHGHADSVKNMITYLKAKIPAAFVIAGNVGTPEAVIDLENWGADATKVGIGPGKVCITKLKTGFGTGGWQLSALKWCARVATKPIIADGGIRSHGDIAKSVRFGATMVMVGSLFAGHEESPGKTVEVDGELYKEYYGSASDFNKGEYKHVEGKRILEPIKGKLADTLTEMEQDIQSSISYSGGKKLMDIRKVNYVILGGDNAGEHLLM.

The active-site Thioimidate intermediate is Cys-173. An NADP(+)-binding site is contributed by 202 to 225; sequence IIADGGIRSHGDIAKSVRFGATMV.

This sequence belongs to the IMPDH/GMPR family. GuaC type 2 subfamily.

It carries out the reaction IMP + NH4(+) + NADP(+) = GMP + NADPH + 2 H(+). Catalyzes the irreversible NADPH-dependent deamination of GMP to IMP. It functions in the conversion of nucleobase, nucleoside and nucleotide derivatives of G to A nucleotides, and in maintaining the intracellular balance of A and G nucleotides. The polypeptide is GMP reductase (Acidovorax ebreus (strain TPSY) (Diaphorobacter sp. (strain TPSY))).